The chain runs to 115 residues: Histone H2A-Bbd type 1 (115 aa).

A disordered region spans residues 1–21; the sequence is MPRRRRRRGSSGAGGRGRTCS. Residues 87 to 115 form a docking domain region; it reads LLDMVVHNDRLLSTLFNTTTISQVAPGED.

It belongs to the histone H2A family. In terms of assembly, the nucleosome is a histone octamer containing two molecules each of H2A, H2B, H3 and H4 assembled in one H3-H4 heterotetramer and two H2A-H2B heterodimers. May be incorporated into a proportion of nucleosomes, replacing one or more H2A molecules. Present in mature sperm.

The protein localises to the nucleus. The protein resides in the chromosome. Functionally, atypical histone H2A which can replace conventional H2A in some nucleosomes and is associated with active transcription and mRNA processing. Nucleosomes wrap and compact DNA into chromatin, limiting DNA accessibility to the cellular machineries which require DNA as a template. Histones thereby play a central role in transcription regulation, DNA repair, DNA replication and chromosomal stability. Nucleosomes containing this histone are less rigid and organize less DNA than canonical nucleosomes in vivo. They are enriched in actively transcribed genes and associate with the elongating form of RNA polymerase. They associate with spliceosome components and are required for mRNA splicing. The sequence is that of Histone H2A-Bbd type 1 from Homo sapiens (Human).